A 217-amino-acid chain; its full sequence is 3,4-dihydroxy-2-butanone 4-phosphate synthase (217 aa).

D-ribulose 5-phosphate is bound by residues 37-38 (RE), Asp42, 150-154 (RGGHT), and Glu174. Position 38 (Glu38) interacts with Mg(2+). His153 lines the Mg(2+) pocket.

Belongs to the DHBP synthase family. In terms of assembly, homodimer. Mg(2+) serves as cofactor. Requires Mn(2+) as cofactor.

The enzyme catalyses D-ribulose 5-phosphate = (2S)-2-hydroxy-3-oxobutyl phosphate + formate + H(+). It functions in the pathway cofactor biosynthesis; riboflavin biosynthesis; 2-hydroxy-3-oxobutyl phosphate from D-ribulose 5-phosphate: step 1/1. Catalyzes the conversion of D-ribulose 5-phosphate to formate and 3,4-dihydroxy-2-butanone 4-phosphate. The chain is 3,4-dihydroxy-2-butanone 4-phosphate synthase from Pectobacterium carotovorum subsp. carotovorum (strain PC1).